The following is a 575-amino-acid chain: Transcription factor COE2 (575 aa).

Positions 62–65 (RKSN) are interaction with DNA. The C5-type zinc finger occupies 150 to 169 (CRVLLTHEVMCSRCCEKKSC). Interaction with DNA stretches follow at residues 196 to 203 (NCLKTAGN) and 235 to 238 (NNSK). One can recognise an IPT/TIG domain in the interval 253 to 336 (PCIKAISPSE…KGAPGRFIYT (84 aa)). The span at 441–453 (STQGNNQGYIRNT) shows a compositional bias: polar residues. The disordered stretch occupies residues 441 to 479 (STQGNNQGYIRNTSSISPRGYSSSSTPQQSNYSTSSNSM). The segment covering 454-479 (SSISPRGYSSSSTPQQSNYSTSSNSM) has biased composition (low complexity).

Belongs to the COE family. In terms of assembly, forms either a homodimer or a heterodimer with a related family member. Interacts with SIX1.

The protein localises to the nucleus. In terms of biological role, transcription factor that, in osteoblasts, activates the decoy receptor for RANKL, TNFRSF11B, which in turn regulates osteoclast differentiation. Acts in synergy with the Wnt-responsive LEF1/CTNNB1 pathway. Recognizes variations of the palindromic sequence 5'-ATTCCCNNGGGAATT-3'. The sequence is that of Transcription factor COE2 (EBF2) from Homo sapiens (Human).